The following is a 176-amino-acid chain: Large ribosomal subunit protein uL6 (176 aa).

The span at 151–170 (RPPEPYKGKGVRYADEQVRR) shows a compositional bias: basic and acidic residues. A disordered region spans residues 151–176 (RPPEPYKGKGVRYADEQVRRKEAKKK).

The protein belongs to the universal ribosomal protein uL6 family. Part of the 50S ribosomal subunit.

Its function is as follows. This protein binds to the 23S rRNA, and is important in its secondary structure. It is located near the subunit interface in the base of the L7/L12 stalk, and near the tRNA binding site of the peptidyltransferase center. The sequence is that of Large ribosomal subunit protein uL6 from Shewanella loihica (strain ATCC BAA-1088 / PV-4).